A 280-amino-acid polypeptide reads, in one-letter code: Thymidylate synthase (280 aa).

A dUMP-binding site is contributed by R21. A (6R)-5,10-methylene-5,6,7,8-tetrahydrofolate-binding site is contributed by H51. Residue 142–143 (RR) participates in dUMP binding. The active-site Nucleophile is C162. Residues 182-185 (RSAD), N193, and 223-225 (HLY) contribute to the dUMP site. D185 provides a ligand contact to (6R)-5,10-methylene-5,6,7,8-tetrahydrofolate. Residue A279 coordinates (6R)-5,10-methylene-5,6,7,8-tetrahydrofolate.

The protein belongs to the thymidylate synthase family. Bacterial-type ThyA subfamily. Homodimer.

The protein localises to the cytoplasm. It catalyses the reaction dUMP + (6R)-5,10-methylene-5,6,7,8-tetrahydrofolate = 7,8-dihydrofolate + dTMP. It functions in the pathway pyrimidine metabolism; dTTP biosynthesis. Catalyzes the reductive methylation of 2'-deoxyuridine-5'-monophosphate (dUMP) to 2'-deoxythymidine-5'-monophosphate (dTMP) while utilizing 5,10-methylenetetrahydrofolate (mTHF) as the methyl donor and reductant in the reaction, yielding dihydrofolate (DHF) as a by-product. This enzymatic reaction provides an intracellular de novo source of dTMP, an essential precursor for DNA biosynthesis. This Acinetobacter baylyi (strain ATCC 33305 / BD413 / ADP1) protein is Thymidylate synthase.